A 122-amino-acid polypeptide reads, in one-letter code: MRFFYKLALMTTVASLACSDTALASTDLMPFNVAETQVSTHDIVSAGRSLRAEDTSTSIDNLRDPTMKEKIQFKLWYTRGKTPGQVHRDFFEGLDESIIVNNPNYEVWKMYEAYYNNKKGND.

Positions 1-24 are cleaved as a signal peptide; sequence MRFFYKLALMTTVASLACSDTALA. Residues 48–51 carry the RxLR motif; sequence RSLR.

It belongs to the RxLR effector family.

The protein resides in the secreted. It is found in the host cytoplasm. Its subcellular location is the host nucleus. In terms of biological role, secreted effector that does not suppress pattern-triggered immunity (PTI) in plant host. In Plasmopara halstedii (Downy mildew of sunflower), this protein is Secreted RxLR effector protein RXLR-C251.